We begin with the raw amino-acid sequence, 383 residues long: S-adenosylmethionine synthase (383 aa).

His15 provides a ligand contact to ATP. Asp17 serves as a coordination point for Mg(2+). Glu43 serves as a coordination point for K(+). L-methionine-binding residues include Glu56 and Gln99. The segment at 99-109 (QSPDINQGVDR) is flexible loop. ATP is bound by residues 164–166 (DAK), 230–231 (RF), Asp239, 245–246 (RK), Ala262, and Lys266. Asp239 serves as a coordination point for L-methionine. Lys270 contributes to the L-methionine binding site.

It belongs to the AdoMet synthase family. In terms of assembly, homotetramer; dimer of dimers. It depends on Mg(2+) as a cofactor. The cofactor is K(+).

It localises to the cytoplasm. It carries out the reaction L-methionine + ATP + H2O = S-adenosyl-L-methionine + phosphate + diphosphate. Its pathway is amino-acid biosynthesis; S-adenosyl-L-methionine biosynthesis; S-adenosyl-L-methionine from L-methionine: step 1/1. Functionally, catalyzes the formation of S-adenosylmethionine (AdoMet) from methionine and ATP. The overall synthetic reaction is composed of two sequential steps, AdoMet formation and the subsequent tripolyphosphate hydrolysis which occurs prior to release of AdoMet from the enzyme. This Shewanella sp. (strain W3-18-1) protein is S-adenosylmethionine synthase.